A 250-amino-acid chain; its full sequence is Probable cytokinin riboside 5'-monophosphate phosphoribohydrolase LOGL6 (250 aa).

Residues E98, 116-117, and 133-139 contribute to the substrate site; these read RK and GYGTLEE.

Belongs to the LOG family. In terms of tissue distribution, expressed in roots, leaves, stems, tiller buds, shoot apex, immature inflorescences and flowers.

The enzyme catalyses N(6)-(dimethylallyl)adenosine 5'-phosphate + H2O = N(6)-dimethylallyladenine + D-ribose 5-phosphate. It catalyses the reaction 9-ribosyl-trans-zeatin 5'-phosphate + H2O = trans-zeatin + D-ribose 5-phosphate. Cytokinin-activating enzyme working in the direct activation pathway. Phosphoribohydrolase that converts inactive cytokinin nucleotides to the biologically active free-base forms. This is Probable cytokinin riboside 5'-monophosphate phosphoribohydrolase LOGL6 (LOGL6) from Oryza sativa subsp. japonica (Rice).